A 135-amino-acid chain; its full sequence is Large ribosomal subunit protein uL16c (135 aa).

The protein belongs to the universal ribosomal protein uL16 family. Part of the 50S ribosomal subunit.

Its subcellular location is the plastid. The protein localises to the chloroplast. The sequence is that of Large ribosomal subunit protein uL16c from Vitis vinifera (Grape).